The chain runs to 118 residues: Small ribosomal subunit protein uS13 (118 aa).

The segment at 94-118 (SLPLRGQRTKTNARTRKGPRKPIKK) is disordered.

It belongs to the universal ribosomal protein uS13 family. As to quaternary structure, part of the 30S ribosomal subunit. Forms a loose heterodimer with protein S19. Forms two bridges to the 50S subunit in the 70S ribosome.

Located at the top of the head of the 30S subunit, it contacts several helices of the 16S rRNA. In the 70S ribosome it contacts the 23S rRNA (bridge B1a) and protein L5 of the 50S subunit (bridge B1b), connecting the 2 subunits; these bridges are implicated in subunit movement. Contacts the tRNAs in the A and P-sites. In Vibrio cholerae serotype O1 (strain ATCC 39315 / El Tor Inaba N16961), this protein is Small ribosomal subunit protein uS13.